The primary structure comprises 426 residues: UDP-N-acetylmuramoylalanine--D-glutamate ligase (426 aa).

Gly112–Thr118 is a binding site for ATP.

This sequence belongs to the MurCDEF family.

Its subcellular location is the cytoplasm. It catalyses the reaction UDP-N-acetyl-alpha-D-muramoyl-L-alanine + D-glutamate + ATP = UDP-N-acetyl-alpha-D-muramoyl-L-alanyl-D-glutamate + ADP + phosphate + H(+). It participates in cell wall biogenesis; peptidoglycan biosynthesis. Cell wall formation. Catalyzes the addition of glutamate to the nucleotide precursor UDP-N-acetylmuramoyl-L-alanine (UMA). This Thermosipho melanesiensis (strain DSM 12029 / CIP 104789 / BI429) protein is UDP-N-acetylmuramoylalanine--D-glutamate ligase.